The chain runs to 280 residues: Phosphonates import ATP-binding protein PhnC 1 (280 aa).

Residues 3–247 (FRLDAASVSY…LLRELYASES (245 aa)) enclose the ABC transporter domain. 36 to 43 (GPSGAGKT) serves as a coordination point for ATP.

Belongs to the ABC transporter superfamily. Phosphonates importer (TC 3.A.1.9.1) family. In terms of assembly, the complex is composed of two ATP-binding proteins (PhnC), two transmembrane proteins (PhnE) and a solute-binding protein (PhnD).

The protein resides in the cell inner membrane. It carries out the reaction phosphonate(out) + ATP + H2O = phosphonate(in) + ADP + phosphate + H(+). Part of the ABC transporter complex PhnCDE involved in phosphonates import. Responsible for energy coupling to the transport system. This is Phosphonates import ATP-binding protein PhnC 1 from Cupriavidus necator (strain ATCC 17699 / DSM 428 / KCTC 22496 / NCIMB 10442 / H16 / Stanier 337) (Ralstonia eutropha).